Reading from the N-terminus, the 180-residue chain is Acireductone dioxygenase (180 aa).

Residues His97, His99, Glu103, and His141 each contribute to the Fe(2+) site. Ni(2+)-binding residues include His97, His99, Glu103, and His141.

It belongs to the acireductone dioxygenase (ARD) family. In terms of assembly, monomer. Fe(2+) is required as a cofactor. Ni(2+) serves as cofactor.

It catalyses the reaction 1,2-dihydroxy-5-(methylsulfanyl)pent-1-en-3-one + O2 = 3-(methylsulfanyl)propanoate + CO + formate + 2 H(+). The catalysed reaction is 1,2-dihydroxy-5-(methylsulfanyl)pent-1-en-3-one + O2 = 4-methylsulfanyl-2-oxobutanoate + formate + 2 H(+). The protein operates within amino-acid biosynthesis; L-methionine biosynthesis via salvage pathway; L-methionine from S-methyl-5-thio-alpha-D-ribose 1-phosphate: step 5/6. Its function is as follows. Catalyzes 2 different reactions between oxygen and the acireductone 1,2-dihydroxy-3-keto-5-methylthiopentene (DHK-MTPene) depending upon the metal bound in the active site. Fe-containing acireductone dioxygenase (Fe-ARD) produces formate and 2-keto-4-methylthiobutyrate (KMTB), the alpha-ketoacid precursor of methionine in the methionine recycle pathway. Ni-containing acireductone dioxygenase (Ni-ARD) produces methylthiopropionate, carbon monoxide and formate, and does not lie on the methionine recycle pathway. This chain is Acireductone dioxygenase, found in Yersinia enterocolitica serotype O:8 / biotype 1B (strain NCTC 13174 / 8081).